Here is a 164-residue protein sequence, read N- to C-terminus: Galectin-3 (164 aa).

Positions 9 to 154 (STVDLSEPLK…FSDVLGVTVL (146 aa)) constitute a Galectin domain. A carbohydrate contacts are provided by N45, R64, N73, R81, E84, and N138.

As to quaternary structure, homotetramer. Oligomerization is required for carbohydrate binding.

It is found in the secreted. The protein resides in the extracellular space. It localises to the extracellular matrix. The protein localises to the cell wall. Its function is as follows. Binds complex carbohydrates, such as chitooligosaccharides. Does not bind lactose. May play a role in fruiting body formation. This is Galectin-3 (Cgl3) from Coprinopsis cinerea (Inky cap fungus).